Consider the following 187-residue polypeptide: Putative AgrB-like protein 1 (187 aa).

5 helical membrane-spanning segments follow: residues V29 to I49, L50 to I70, C81 to F98, L103 to K120, and I149 to W169.

This sequence belongs to the AgrB family.

Its subcellular location is the cell membrane. May be involved in the proteolytic processing of a quorum sensing system signal molecule precursor. The polypeptide is Putative AgrB-like protein 1 (Clostridium perfringens (strain 13 / Type A)).